We begin with the raw amino-acid sequence, 464 residues long: Myrosinase 1 (464 aa).

Q19 lines the substrate pocket. The Zn(2+) site is built by H39 and D52. Substrate-binding residues include H122 and N166. E167 serves as the catalytic Nucleophile. Catalysis depends on E374, which acts as the Proton donor. N397 carries N-linked (GlcNAc...) asparagine glycosylation.

As to quaternary structure, homodimer. Expressed in the skeletal muscle tissues surrounding the head, abdomen and thorax. Not expressed in flight muscles (at protein level).

The enzyme catalyses a thioglucoside + H2O = a sugar + a thiol.. Functionally, hydrolyzes glucosinolates to a labile aglycone. This rapidly undergoes spontaneous rearrangement, eliminating sulfur to yield a number of toxic metabolites. Thereby developing a chemical defense system that exploits and mimics the host plant. The polypeptide is Myrosinase 1 (Brevicoryne brassicae (Mealy cabbage aphid)).